The following is a 176-amino-acid chain: NADH-quinone oxidoreductase subunit B 1 (176 aa).

4 residues coordinate [4Fe-4S] cluster: Cys-55, Cys-56, Cys-120, and Cys-150.

It belongs to the complex I 20 kDa subunit family. NDH-1 is composed of 14 different subunits. Subunits NuoB, C, D, E, F, and G constitute the peripheral sector of the complex. Requires [4Fe-4S] cluster as cofactor.

Its subcellular location is the cell inner membrane. It catalyses the reaction a quinone + NADH + 5 H(+)(in) = a quinol + NAD(+) + 4 H(+)(out). NDH-1 shuttles electrons from NADH, via FMN and iron-sulfur (Fe-S) centers, to quinones in the respiratory chain. Couples the redox reaction to proton translocation (for every two electrons transferred, four hydrogen ions are translocated across the cytoplasmic membrane), and thus conserves the redox energy in a proton gradient. The chain is NADH-quinone oxidoreductase subunit B 1 from Cereibacter sphaeroides (strain ATCC 17029 / ATH 2.4.9) (Rhodobacter sphaeroides).